A 404-amino-acid chain; its full sequence is Cysteine desulfurase IscS (404 aa).

Residues 75 to 76 (AT), N155, Q183, and 203 to 205 (SAH) each bind pyridoxal 5'-phosphate. N6-(pyridoxal phosphate)lysine is present on K206. A pyridoxal 5'-phosphate-binding site is contributed by T243. Catalysis depends on C328, which acts as the Cysteine persulfide intermediate. [2Fe-2S] cluster is bound at residue C328.

Belongs to the class-V pyridoxal-phosphate-dependent aminotransferase family. NifS/IscS subfamily. In terms of assembly, homodimer. Forms a heterotetramer with IscU, interacts with other sulfur acceptors. It depends on pyridoxal 5'-phosphate as a cofactor.

The protein localises to the cytoplasm. The enzyme catalyses (sulfur carrier)-H + L-cysteine = (sulfur carrier)-SH + L-alanine. The protein operates within cofactor biosynthesis; iron-sulfur cluster biosynthesis. Its function is as follows. Master enzyme that delivers sulfur to a number of partners involved in Fe-S cluster assembly, tRNA modification or cofactor biosynthesis. Catalyzes the removal of elemental sulfur atoms from cysteine to produce alanine. Functions as a sulfur delivery protein for Fe-S cluster synthesis onto IscU, an Fe-S scaffold assembly protein, as well as other S acceptor proteins. This is Cysteine desulfurase IscS from Proteus mirabilis (strain HI4320).